We begin with the raw amino-acid sequence, 577 residues long: Arginine--tRNA ligase (577 aa).

Positions 122–132 match the 'HIGH' region motif; the sequence is PNVAKEMHVGH.

The protein belongs to the class-I aminoacyl-tRNA synthetase family. As to quaternary structure, monomer.

It is found in the cytoplasm. It carries out the reaction tRNA(Arg) + L-arginine + ATP = L-arginyl-tRNA(Arg) + AMP + diphosphate. This Shigella flexneri protein is Arginine--tRNA ligase.